The following is a 352-amino-acid chain: S-adenosylmethionine:tRNA ribosyltransferase-isomerase (352 aa).

This sequence belongs to the QueA family. Monomer.

It localises to the cytoplasm. The enzyme catalyses 7-aminomethyl-7-carbaguanosine(34) in tRNA + S-adenosyl-L-methionine = epoxyqueuosine(34) in tRNA + adenine + L-methionine + 2 H(+). The protein operates within tRNA modification; tRNA-queuosine biosynthesis. In terms of biological role, transfers and isomerizes the ribose moiety from AdoMet to the 7-aminomethyl group of 7-deazaguanine (preQ1-tRNA) to give epoxyqueuosine (oQ-tRNA). This is S-adenosylmethionine:tRNA ribosyltransferase-isomerase from Syntrophomonas wolfei subsp. wolfei (strain DSM 2245B / Goettingen).